The sequence spans 98 residues: MNQERLYTVLRGPHISEKSTVIADGAGQVVFQVAPDANKKEIKAAVEKLFDVQVTGVRTVNAKGKRKRFGMIRGRRRDWKKAYVTLAEGQDIDFLGGE.

This sequence belongs to the universal ribosomal protein uL23 family. Part of the 50S ribosomal subunit. Contacts protein L29, and trigger factor when it is bound to the ribosome.

Its function is as follows. One of the early assembly proteins it binds 23S rRNA. One of the proteins that surrounds the polypeptide exit tunnel on the outside of the ribosome. Forms the main docking site for trigger factor binding to the ribosome. The sequence is that of Large ribosomal subunit protein uL23 from Halorhodospira halophila (strain DSM 244 / SL1) (Ectothiorhodospira halophila (strain DSM 244 / SL1)).